We begin with the raw amino-acid sequence, 393 residues long: Chalcone synthase 2 (393 aa).

Residue cysteine 166 is part of the active site.

The protein belongs to the thiolase-like superfamily. Chalcone/stilbene synthases family.

It carries out the reaction (E)-4-coumaroyl-CoA + 3 malonyl-CoA + 3 H(+) = 2',4,4',6'-tetrahydroxychalcone + 3 CO2 + 4 CoA. It participates in secondary metabolite biosynthesis; flavonoid biosynthesis. In terms of biological role, the primary product of this enzyme is 4,2',4',6'-tetrahydroxychalcone (also termed naringenin-chalcone or chalcone) which can under specific conditions spontaneously isomerize into naringenin. This Ruta graveolens (Common rue) protein is Chalcone synthase 2 (CHS2).